Here is a 123-residue protein sequence, read N- to C-terminus: Small ribosomal subunit protein uS12 (123 aa).

At Asp89 the chain carries 3-methylthioaspartic acid.

Belongs to the universal ribosomal protein uS12 family. Part of the 30S ribosomal subunit. Contacts proteins S8 and S17. May interact with IF1 in the 30S initiation complex.

Its function is as follows. With S4 and S5 plays an important role in translational accuracy. In terms of biological role, interacts with and stabilizes bases of the 16S rRNA that are involved in tRNA selection in the A site and with the mRNA backbone. Located at the interface of the 30S and 50S subunits, it traverses the body of the 30S subunit contacting proteins on the other side and probably holding the rRNA structure together. The combined cluster of proteins S8, S12 and S17 appears to hold together the shoulder and platform of the 30S subunit. In Orientia tsutsugamushi (strain Boryong) (Rickettsia tsutsugamushi), this protein is Small ribosomal subunit protein uS12.